We begin with the raw amino-acid sequence, 83 residues long: Cytochrome b559 subunit alpha (83 aa).

The chain crosses the membrane as a helical span at residues 21 to 35 (VIHSITIPSLFIAGW). Histidine 23 is a binding site for heme.

It belongs to the PsbE/PsbF family. Heterodimer of an alpha subunit and a beta subunit. PSII is composed of 1 copy each of membrane proteins PsbA, PsbB, PsbC, PsbD, PsbE, PsbF, PsbH, PsbI, PsbJ, PsbK, PsbL, PsbM, PsbT, PsbX, PsbY, PsbZ, Psb30/Ycf12, at least 3 peripheral proteins of the oxygen-evolving complex and a large number of cofactors. It forms dimeric complexes. Heme b is required as a cofactor.

Its subcellular location is the plastid membrane. In terms of biological role, this b-type cytochrome is tightly associated with the reaction center of photosystem II (PSII). PSII is a light-driven water:plastoquinone oxidoreductase that uses light energy to abstract electrons from H(2)O, generating O(2) and a proton gradient subsequently used for ATP formation. It consists of a core antenna complex that captures photons, and an electron transfer chain that converts photonic excitation into a charge separation. This chain is Cytochrome b559 subunit alpha, found in Cuscuta reflexa (Southern Asian dodder).